A 162-amino-acid polypeptide reads, in one-letter code: Serine-protein kinase RsbW (162 aa).

It belongs to the anti-sigma-factor family.

It catalyses the reaction L-seryl-[protein] + ATP = O-phospho-L-seryl-[protein] + ADP + H(+). The catalysed reaction is L-threonyl-[protein] + ATP = O-phospho-L-threonyl-[protein] + ADP + H(+). In terms of biological role, negative regulator of sigma-B activity. Phosphorylates and inactivates its specific antagonist protein, RsbV. Upon phosphorylation of RsbV, RsbW is released and binds to sigma-B, thereby blocking its ability to form an RNA polymerase holoenzyme (E-sigma-B). This is Serine-protein kinase RsbW from Bacillus pumilus (strain SAFR-032).